The following is a 479-amino-acid chain: Catalase easC (479 aa).

Residues 1–13 are compositionally biased toward polar residues; the sequence is MASQVSLTAQGSG. The segment at 1-28 is disordered; sequence MASQVSLTAQGSGLSAPLNGPEHLTSTT. His-53 is a catalytic residue. Tyr-343 is a heme binding site. The interval 365–385 is disordered; the sequence is HAANDAPKTKKPAVPLQKQSR.

This sequence belongs to the catalase family. Heme serves as cofactor.

It functions in the pathway alkaloid biosynthesis; ergot alkaloid biosynthesis. In terms of biological role, catalase; part of the gene cluster that mediates the biosynthesis of fungal ergot alkaloid. DmaW catalyzes the first step of ergot alkaloid biosynthesis by condensing dimethylallyl diphosphate (DMAP) and tryptophan to form 4-dimethylallyl-L-tryptophan. The second step is catalyzed by the methyltransferase easF that methylates 4-dimethylallyl-L-tryptophan in the presence of S-adenosyl-L-methionine, resulting in the formation of 4-dimethylallyl-L-abrine. The catalase easC and the FAD-dependent oxidoreductase easE then transform 4-dimethylallyl-L-abrine to chanoclavine-I which is further oxidized by easD in the presence of NAD(+), resulting in the formation of chanoclavine-I aldehyde. Agroclavine dehydrogenase easG then mediates the conversion of chanoclavine-I aldehyde to agroclavine via a non-enzymatic adduct reaction: the substrate is an iminium intermediate that is formed spontaneously from chanoclavine-I aldehyde in the presence of glutathione. Further conversion of agroclavine to paspalic acid is a two-step process involving oxidation of agroclavine to elymoclavine and of elymoclavine to paspalic acid, the second step being performed by the elymoclavine oxidase cloA. However, cloA does not encode a functional enzyme indicating that C.fusiformis terminates its ergot alkaloid pathway at elymoclavine. The sequence is that of Catalase easC from Claviceps fusiformis (Ergot fungus).